A 537-amino-acid chain; its full sequence is Glutamyl-tRNA(Gln) amidotransferase subunit A, chloroplastic/mitochondrial (537 aa).

Active-site charge relay system residues include Lys116 and Ser191. Ser215 (acyl-ester intermediate) is an active-site residue.

Belongs to the amidase family. GatA subfamily. Subunit of the heterotrimeric GatCAB amidotransferase (AdT) complex, composed of A, B and C subunits.

Its subcellular location is the mitochondrion. The protein localises to the plastid. The protein resides in the chloroplast stroma. The catalysed reaction is L-glutamyl-tRNA(Gln) + L-glutamine + ATP + H2O = L-glutaminyl-tRNA(Gln) + L-glutamate + ADP + phosphate + H(+). Functionally, allows the formation of correctly charged Gln-tRNA(Gln) through the transamidation of misacylated Glu-tRNA(Gln) in chloroplasts and mitochondria. The reaction takes place in the presence of glutamine and ATP through an activated gamma-phospho-Glu-tRNA(Gln). This Arabidopsis thaliana (Mouse-ear cress) protein is Glutamyl-tRNA(Gln) amidotransferase subunit A, chloroplastic/mitochondrial.